The following is a 30-amino-acid chain: Elongation factor 1-delta (30 aa).

Belongs to the EF-1-beta/EF-1-delta family. EF-1 is composed of 4 subunits: alpha, beta (1B-alpha=beta'), delta (1B-beta), and gamma (1B-gamma).

Its function is as follows. EF-1-beta and EF-1-delta stimulate the exchange of GDP bound to EF-1-alpha to GTP. This chain is Elongation factor 1-delta, found in Populus euphratica (Euphrates poplar).